The following is a 498-amino-acid chain: L-xylulose/3-keto-L-gulonate kinase (498 aa).

The protein belongs to the FGGY kinase family. Homodimer.

It carries out the reaction L-xylulose + ATP = L-xylulose 5-phosphate + ADP + H(+). The catalysed reaction is 3-dehydro-L-gulonate + ATP = 3-dehydro-L-gulonate 6-phosphate + ADP + H(+). Functionally, catalyzes the phosphorylation of L-xylulose and 3-keto-L-gulonate. Is involved in L-lyxose utilization via xylulose, and may also be involved in the utilization of 2,3-diketo-L-gulonate. In Escherichia coli (strain K12), this protein is L-xylulose/3-keto-L-gulonate kinase (lyx).